A 227-amino-acid chain; its full sequence is Killer cell lectin-like receptor subfamily B member 1A (227 aa).

The Cytoplasmic portion of the chain corresponds to 1 to 45 (MDTARVYFGLKPPRTPGAWHESPPSLPPDACRCPRSHRLALKLSC). Positions 31–34 (CRCP) match the LCK-binding motif motif. The chain crosses the membrane as a helical; Signal-anchor for type II membrane protein span at residues 46-66 (AGLILLVVTLIGMSVLVRVLI). Residues 67-227 (QKPSIEKCYV…TLSNYVGYGH (161 aa)) are Extracellular-facing. Residues 93–212 (ECPQDWLSHR…NSDNRWICQK (120 aa)) form the C-type lectin domain. Cystine bridges form between C94–C105, C122–C210, and C189–C202.

As to quaternary structure, homodimer; disulfide-linked. Interacts with tyrosine kinase LCK. In terms of tissue distribution, expressed in natural killer cells.

The protein resides in the membrane. In terms of biological role, plays a stimulatory role on natural killer (NK) cell cytotoxicity. The polypeptide is Killer cell lectin-like receptor subfamily B member 1A (Klrb1a) (Mus musculus (Mouse)).